A 214-amino-acid polypeptide reads, in one-letter code: Large ribosomal subunit protein uL3 (214 aa).

Positions 134 to 161 (THGNSLSHRAPGSIGQCQTPGRVMKGKK) are disordered. The residue at position 151 (Q151) is an N5-methylglutamine.

This sequence belongs to the universal ribosomal protein uL3 family. Part of the 50S ribosomal subunit. Forms a cluster with proteins L14 and L19. Methylated by PrmB.

Its function is as follows. One of the primary rRNA binding proteins, it binds directly near the 3'-end of the 23S rRNA, where it nucleates assembly of the 50S subunit. The polypeptide is Large ribosomal subunit protein uL3 (Teredinibacter turnerae (strain ATCC 39867 / T7901)).